Reading from the N-terminus, the 218-residue chain is Uracil-DNA glycosylase (218 aa).

The active-site Proton acceptor is D68.

Belongs to the uracil-DNA glycosylase (UDG) superfamily. UNG family. Homodimer. Interacts with protein OPG148. Component of the Uracil-DNA glycosylase(UDG)-OPG148-polymerase complex; OPG148 and UDG form a heterodimeric processivity factor that associates with OPG71 to form the processive polymerase holoenzyme.

The catalysed reaction is Hydrolyzes single-stranded DNA or mismatched double-stranded DNA and polynucleotides, releasing free uracil.. Its function is as follows. Plays an essential role in viral replication as a component of the DNA polymerase processivity factor. Excises uracil residues from the DNA which can arise as a result of misincorporation of dUMP residues by DNA polymerase or due to deamination of cytosine. The sequence is that of Uracil-DNA glycosylase (OPG116) from Vaccinia virus (strain Ankara) (VACV).